The sequence spans 316 residues: Spore wall protein 30 (316 aa).

The first 18 residues, 1–18 (MKTSVVILAMSYITSIFA), serve as a signal peptide directing secretion. Residues Asn19 and Asn251 are each glycosylated (N-linked (GlcNAc...) asparagine).

Its subcellular location is the spore. It is found in the perispore. The sequence is that of Spore wall protein 30 (SWP32) from Nosema bombycis (strain CQ1 / CVCC 102059) (Microsporidian parasite).